A 398-amino-acid polypeptide reads, in one-letter code: Succinate--CoA ligase [ADP-forming] subunit beta (398 aa).

Residues 9–254 form the ATP-grasp domain; sequence KRLLHEYGAP…TSEEDPKEIE (246 aa). ATP is bound by residues lysine 46, 53–55, glutamate 109, alanine 112, and glutamate 117; that span reads GRG. Asparagine 209 and aspartate 223 together coordinate Mg(2+). Substrate-binding positions include asparagine 274 and 331 to 333; that span reads GIM.

It belongs to the succinate/malate CoA ligase beta subunit family. As to quaternary structure, heterotetramer of two alpha and two beta subunits. Mg(2+) is required as a cofactor.

It carries out the reaction succinate + ATP + CoA = succinyl-CoA + ADP + phosphate. The enzyme catalyses GTP + succinate + CoA = succinyl-CoA + GDP + phosphate. The protein operates within carbohydrate metabolism; tricarboxylic acid cycle; succinate from succinyl-CoA (ligase route): step 1/1. Succinyl-CoA synthetase functions in the citric acid cycle (TCA), coupling the hydrolysis of succinyl-CoA to the synthesis of either ATP or GTP and thus represents the only step of substrate-level phosphorylation in the TCA. The beta subunit provides nucleotide specificity of the enzyme and binds the substrate succinate, while the binding sites for coenzyme A and phosphate are found in the alpha subunit. The protein is Succinate--CoA ligase [ADP-forming] subunit beta of Bartonella henselae (strain ATCC 49882 / DSM 28221 / CCUG 30454 / Houston 1) (Rochalimaea henselae).